A 1405-amino-acid polypeptide reads, in one-letter code: MKDLLKFLKQQSKTEEFNGIKIGLASPDLIRSWSFGEVKKPETINYRTFKPEREGLFCARIFGPVKDYECLCGKYKRLKHRGVICEKCGVEVTQTKVRRERMGHIELASPVAHIWFLKSLPSRIGLMLDMTLRDIERVLYFESFVVIEPGMTSLERGQMLTEENYLDALEEYGDEFEAKMGAEAVLELLRAIDLEKEIEQMREELPSINSETRRKKVTKRLKLMEAFHTSGNKPEWMILKVLPVLPPDLRPLVPLDGGRFATSDLNDLYRRVINRNNRLKRLLDLAAPDIIVRNEKRMLQESVDALLDNGRRGRAITGSNKRPLKSLADMIKGKQGRFRQNLLGKRVDYSGRSVITVGPTLRLHQCGLPKKMALELFKPFIYGKLEGRGLATTIKAAKKMVEREVAEVWDVLDEVIREHPVMLNRAPTLHRLGIQAFEPVLIEGKAIQLHPLVCAAYNADFDGDQMAVHVPLTLEAQLEARALMMSTNNILSPANGEPVITPSQDVVLGLYYTSRERINGRGEGMYFMSVAEVEKAYATGAAELHARVKVRITETVIGDNGERTEQRRIVDTTVGRALLSQILPAGLSFDLVNQNMGKKQISKLLNTCYRQLGLKDTVIFADQLMYTGFRYATISGASVGIDDMVIPAEKYTLVADAEAEVLEIQEQFQSGLVTAGERYNKVIDIWASANEKVSKAMMENLSTETVINRDGVEEKQASFNSIYMMADSGARGSAAQIRQLAGMRGLMAKPDGSIIETPIVANFREGLNVLQYFISTHGARKGLADTALKTANSGYLTRRLVDVAQDLVVIEDDCGTHEGLTMKPLIEGGDVVEPLRERVLGRVVAVDVLYPGTEDVLAPRNTLLDEAWCDKLEEHSIDEVIVRSVITCDTDFGVCAACYGRDLARGHLINHGEAIGVVAAQSIGEPGTQLTMRTFHIGGAASRASAENNVQVKNSGSLKLHNAKYVTNTDGKLVIVSRSSELAIIDELGREKERYKVPYGTVLEKLEEAAVEAGDIIANWDPHTHPIITEVAGSIKFVDMIDGVTMTRQTDELTGLSSIVILDVGQRGSAGKEMRPMIRLVGADGSDLMIPGTEVPAQYFLPGSAIVNLDDNAQIAVGDALARIPQESSKTRDITGGLPRVADLFEARKPKEPAILAEISGTISFGKETKGKRRLVITPADGGEQYEEMIPKWRNLNVFEGEKVERGEVIADGPEAAHDILRLRGIHNVANYIVNEVQDVYRLQGVKINDKHIEVIIRQMLRKCVITSAGDSEFLEGEQVEVSRVKIANRDLIEQGKVPATFERELLGITKASLATESFISAASFQETTRVLTEAAVGGKSDNLRGLKENVIVGRLIPAGTGYAYHKTRNDARAKKDEPVVVNKITASEAEQNLADLLNLAGSQD.

Residues cysteine 70, cysteine 72, cysteine 85, and cysteine 88 each contribute to the Zn(2+) site. Residues aspartate 460, aspartate 462, and aspartate 464 each coordinate Mg(2+). Zn(2+) contacts are provided by cysteine 814, cysteine 888, cysteine 895, and cysteine 898.

This sequence belongs to the RNA polymerase beta' chain family. In terms of assembly, the RNAP catalytic core consists of 2 alpha, 1 beta, 1 beta' and 1 omega subunit. When a sigma factor is associated with the core the holoenzyme is formed, which can initiate transcription. Mg(2+) is required as a cofactor. It depends on Zn(2+) as a cofactor.

The enzyme catalyses RNA(n) + a ribonucleoside 5'-triphosphate = RNA(n+1) + diphosphate. In terms of biological role, DNA-dependent RNA polymerase catalyzes the transcription of DNA into RNA using the four ribonucleoside triphosphates as substrates. The chain is DNA-directed RNA polymerase subunit beta' from Shewanella sp. (strain ANA-3).